A 360-amino-acid chain; its full sequence is Phosphate acyltransferase (360 aa).

A compositionally biased stretch (basic and acidic residues) spans 296–305; the sequence is STLRREHLDR. Positions 296–360 are disordered; the sequence is STLRREHLDR…LRTAEPPGSL (65 aa). Residues 314–333 are compositionally biased toward basic residues; the sequence is PRQRRRPRRQKRRAACRPRP. Low complexity predominate over residues 334–350; that stretch reads RSAAGRAPGSGVRGAAG.

This sequence belongs to the PlsX family. Homodimer. Probably interacts with PlsY.

It is found in the cytoplasm. It carries out the reaction a fatty acyl-[ACP] + phosphate = an acyl phosphate + holo-[ACP]. It functions in the pathway lipid metabolism; phospholipid metabolism. In terms of biological role, catalyzes the reversible formation of acyl-phosphate (acyl-PO(4)) from acyl-[acyl-carrier-protein] (acyl-ACP). This enzyme utilizes acyl-ACP as fatty acyl donor, but not acyl-CoA. The protein is Phosphate acyltransferase of Deinococcus radiodurans (strain ATCC 13939 / DSM 20539 / JCM 16871 / CCUG 27074 / LMG 4051 / NBRC 15346 / NCIMB 9279 / VKM B-1422 / R1).